Here is a 156-residue protein sequence, read N- to C-terminus: Arginine repressor (156 aa).

This sequence belongs to the ArgR family.

It is found in the cytoplasm. The protein operates within amino-acid biosynthesis; L-arginine biosynthesis [regulation]. Its function is as follows. Regulates arginine biosynthesis genes. This is Arginine repressor from Vibrio campbellii (strain ATCC BAA-1116).